The following is a 380-amino-acid chain: tRNA-specific 2-thiouridylase MnmA (380 aa).

ATP is bound by residues 12–19 and methionine 38; that span reads GLSGGVDS. An interaction with target base in tRNA region spans residues 108 to 110; it reads NPD. Cysteine 113 (nucleophile) is an active-site residue. An intrachain disulfide couples cysteine 113 to cysteine 210. Position 138 (glycine 138) interacts with ATP. The segment at 160 to 162 is interaction with tRNA; that stretch reads KDQ. Cysteine 210 serves as the catalytic Cysteine persulfide intermediate.

It belongs to the MnmA/TRMU family.

It is found in the cytoplasm. It catalyses the reaction S-sulfanyl-L-cysteinyl-[protein] + uridine(34) in tRNA + AH2 + ATP = 2-thiouridine(34) in tRNA + L-cysteinyl-[protein] + A + AMP + diphosphate + H(+). Catalyzes the 2-thiolation of uridine at the wobble position (U34) of tRNA, leading to the formation of s(2)U34. In Ureaplasma urealyticum serovar 10 (strain ATCC 33699 / Western), this protein is tRNA-specific 2-thiouridylase MnmA.